Consider the following 410-residue polypeptide: Peptidase T (410 aa).

H79 provides a ligand contact to Zn(2+). Residue D81 is part of the active site. D142 provides a ligand contact to Zn(2+). E176 acts as the Proton acceptor in catalysis. Residues E177, D199, and H381 each contribute to the Zn(2+) site.

This sequence belongs to the peptidase M20B family. Zn(2+) is required as a cofactor.

Its subcellular location is the cytoplasm. It carries out the reaction Release of the N-terminal residue from a tripeptide.. Cleaves the N-terminal amino acid of tripeptides. This is Peptidase T from Listeria monocytogenes serotype 4a (strain HCC23).